A 173-amino-acid polypeptide reads, in one-letter code: Lithostathine-2 (173 aa).

The N-terminal stretch at 1–22 is a signal peptide; the sequence is MAQNNVYLILFLCLMFLSYSQG. The C-type lectin domain occupies 41-171; sequence INCPEGANAY…EAQYSFVCKF (131 aa). Intrachain disulfides connect Cys-43-Cys-54, Cys-71-Cys-169, and Cys-144-Cys-161.

In terms of tissue distribution, expressed only in regenerating islets and normal exocrine pancreas, but not in normal pancreatic islets. Expressed strongly in pancreas, weakly in liver, but not at all in gall bladder.

The protein localises to the secreted. Its function is as follows. Might act as an inhibitor of spontaneous calcium carbonate precipitation. This is Lithostathine-2 (Reg2) from Mus musculus (Mouse).